The following is a 345-amino-acid chain: G-protein coupled receptor str-33 (345 aa).

The Extracellular segment spans residues 1-11; that stretch reads MTVNLRDLSRT. Residues 12–32 traverse the membrane as a helical segment; sequence IAEFAFLTALVCNSLLIYLTA. Residues 33 to 37 lie on the Cytoplasmic side of the membrane; the sequence is RRTKN. A helical membrane pass occupies residues 38 to 58; sequence ITGAYKYMIILFALLGLIFSC. Over 59 to 92 the chain is Extracellular; that stretch reads TEMLARPFVHNFNASFVYFSLSNDLSEFKSLVQM. Asparagine 71 is a glycosylation site (N-linked (GlcNAc...) asparagine). The chain crosses the membrane as a helical span at residues 93-113; that stretch reads LLVLYSGLYSSLISFVAVQFI. Residues 114–133 are Cytoplasmic-facing; that stretch reads YRYMVLVNANLLESWFTGWK. The chain crosses the membrane as a helical span at residues 134–154; that stretch reads LVFWVFYVIFFGFAWSASVYF. Residues 155–204 are Extracellular-facing; sequence CLFPDTYSYNYIRTEFKDVYNIGVDRVAIFILVAYEKHPSSEEYKLRPAS. The helical transmembrane segment at 205–225 threads the bilayer; that stretch reads VIMIAGTISILVIQYSIMLFC. Over 226-258 the chain is Cytoplasmic; it reads GASMHRQMNEKLKNFSPDNQRLQKQFFKTLLLQ. A helical membrane pass occupies residues 259 to 279; that stretch reads ISVPTVLFHMPIFPVLLGPFF. The Extracellular segment spans residues 280-288; sequence NFEISAESG. Residues 289-309 traverse the membrane as a helical segment; the sequence is IIYSLFSLYPPIDGLIIMTVV. Over 310–345 the chain is Cytoplasmic; the sequence is TDYRIALTELFLGSHSGAQVEVIPVEVVSILNFSLL.

Belongs to the nematode receptor-like protein str family. As to expression, detected in ALM and PLM mechanosensory neurons and head neurons.

The protein resides in the cell membrane. In terms of biological role, regulates egg-laying and locomotion. Likely to act upstream of goa-1 to suppress 5-hydroxytryptamine (5-HT) biosynthesis in hermaphrodite-specific neurons (HSNs) through inhibition of tph-1 transcription. The chain is G-protein coupled receptor str-33 from Caenorhabditis elegans.